The sequence spans 396 residues: Ribosomal RNA large subunit methyltransferase I (396 aa).

In terms of domain architecture, PUA spans Thr-2–Arg-81.

It belongs to the methyltransferase superfamily. RlmI family.

The protein localises to the cytoplasm. It catalyses the reaction cytidine(1962) in 23S rRNA + S-adenosyl-L-methionine = 5-methylcytidine(1962) in 23S rRNA + S-adenosyl-L-homocysteine + H(+). Its function is as follows. Specifically methylates the cytosine at position 1962 (m5C1962) of 23S rRNA. In Yersinia pseudotuberculosis serotype O:1b (strain IP 31758), this protein is Ribosomal RNA large subunit methyltransferase I.